The sequence spans 191 residues: Programmed cell death protein 6 (191 aa).

An N-acetylalanine modification is found at Ala-2. 5 consecutive EF-hand domains span residues 23 to 58, 59 to 89, 90 to 125, 126 to 161, and 162 to 191; these read PDQS…GTWT, PFNP…TGVW, KYIT…FGYR, LSDQ…LQRL, and TDIF…FSIV. Positions 36, 38, 40, 42, and 47 each coordinate Ca(2+). The Ca(2+) site is built by Asp-103, Asp-105, Ser-107, Met-109, and Glu-114. 4 residues coordinate Mg(2+): Asp-169, Asp-171, Asp-173, and Trp-175.

In terms of assembly, homodimer and heterodimer; heterodimerizes (via the EF-hand 5) with PEF1. Isoform 1 and isoform 2 self-associate; probably forming homodimers. Interacts with CPNE4 (via VWFA domain). Interacts with PDCD6IP; the interaction is calcium-dependent. Interacts with RBM22. Interacts with PLSCR4. Interacts with ANXA7 and TSG101. Interacts with DAPK1. Interacts with SEC31A; the interaction is calcium-dependent and promotes monoubiquitination of SEC31A. Interacts with ANXA11 (via N-terminus); the interaction is calcium-dependent. Interacts with PLSCR3 (via N-terminus); the interaction is calcium-dependent. Interacts with MCOLN1; the interaction is calcium-dependent. Interacts with KDR; the interaction is calcium-dependent. Interacts with HEBP2; the interaction is calcium-dependent. Interacts with TFG. Isoform 1: Interacts with SHISA5, leading to stabilize it. Isoform 2: Does not interact with SHISA5. Isoform 2: Does not interact with PDCD6IP, TSG101, ANXA7 and ANXA11.

It is found in the endoplasmic reticulum membrane. The protein localises to the cytoplasmic vesicle. Its subcellular location is the COPII-coated vesicle membrane. It localises to the cytoplasm. The protein resides in the nucleus. It is found in the endosome. In terms of biological role, calcium sensor that plays a key role in processes such as endoplasmic reticulum (ER)-Golgi vesicular transport, endosomal biogenesis or membrane repair. Acts as an adapter that bridges unrelated proteins or stabilizes weak protein-protein complexes in response to calcium: calcium-binding triggers exposure of apolar surface, promoting interaction with different sets of proteins thanks to 3 different hydrophobic pockets, leading to translocation to membranes. Involved in ER-Golgi transport. Regulates ER-Golgi transport by promoting the association between PDCD6IP and TSG101, thereby bridging together the ESCRT-III and ESCRT-I complexes. Together with PEF1, acts as a calcium-dependent adapter for the BCR(KLHL12) complex, a complex involved in ER-Golgi transport by regulating the size of COPII coats. In response to cytosolic calcium increase, the heterodimer formed with PEF1 interacts with, and bridges together the BCR(KLHL12) complex and SEC31 (SEC31A or SEC31B), promoting monoubiquitination of SEC31 and subsequent collagen export, which is required for neural crest specification. Involved in the regulation of the distribution and function of MCOLN1 in the endosomal pathway. Promotes localization and polymerization of TFG at endoplasmic reticulum exit site. Required for T-cell receptor-, Fas-, and glucocorticoid-induced apoptosis. May mediate Ca(2+)-regulated signals along the death pathway: interaction with DAPK1 can accelerate apoptotic cell death by increasing caspase-3 activity. Its role in apoptosis may however be indirect, as suggested by knockout experiments. May inhibit KDR/VEGFR2-dependent angiogenesis; the function involves inhibition of VEGF-induced phosphorylation of the Akt signaling pathway. Has a lower Ca(2+) affinity than isoform 1. The polypeptide is Programmed cell death protein 6 (Rattus norvegicus (Rat)).